A 709-amino-acid polypeptide reads, in one-letter code: RxLR effector protein PITG_15110 (709 aa).

The N-terminal stretch at 1–18 (MHAYSAAVLMGLLMVAEG) is a signal peptide. The RxLR-dEER motif lies at 51-66 (RLLREPETTEASNEDR).

This sequence belongs to the RxLR effector family.

The protein localises to the secreted. It is found in the host cytoplasm. It localises to the host cytoskeleton. In terms of biological role, effector that enhances P.infestans colonization of Nicotiana benthamiana leaves. The polypeptide is RxLR effector protein PITG_15110 (Phytophthora infestans (strain T30-4) (Potato late blight agent)).